The primary structure comprises 149 residues: Large ribosomal subunit protein bL9 (149 aa).

The protein belongs to the bacterial ribosomal protein bL9 family.

Binds to the 23S rRNA. The protein is Large ribosomal subunit protein bL9 of Endomicrobium trichonymphae.